Here is a 451-residue protein sequence, read N- to C-terminus: UPF0210 protein LMHCC_2097 (451 aa).

The protein belongs to the UPF0210 family. Homodimer.

The sequence is that of UPF0210 protein LMHCC_2097 from Listeria monocytogenes serotype 4a (strain HCC23).